The sequence spans 416 residues: Probable F-box protein At5g47300 (416 aa).

An F-box domain is found at 40–86; the sequence is TLMLSDLPGDLLEEILCRVPATSLKQLRSTCKQWNNLFNNGRFTRKH.

The chain is Probable F-box protein At5g47300 from Arabidopsis thaliana (Mouse-ear cress).